Reading from the N-terminus, the 326-residue chain is tRNA-modifying protein YgfZ (326 aa).

The folate site is built by tryptophan 27 and tryptophan 189.

This sequence belongs to the tRNA-modifying YgfZ family.

The protein localises to the cytoplasm. Functionally, folate-binding protein involved in regulating the level of ATP-DnaA and in the modification of some tRNAs. It is probably a key factor in regulatory networks that act via tRNA modification, such as initiation of chromosomal replication. The polypeptide is tRNA-modifying protein YgfZ (Escherichia coli (strain SMS-3-5 / SECEC)).